Consider the following 395-residue polypeptide: Isoafricanol synthase (395 aa).

Positions 95, 246, 250, and 254 each coordinate Mg(2+). The segment covering 346–357 (TEAVSGGRERPW) has biased composition (basic and acidic residues). A disordered region spans residues 346 to 395 (TEAVSGGRERPWARLTGAEDLIRAGRGAPPPPGSGPDTRQPMPSEPSQLA).

The protein belongs to the terpene synthase family. Mg(2+) is required as a cofactor.

The catalysed reaction is (2E,6E)-farnesyl diphosphate + H2O = (+)-isoafricanol + diphosphate. In terms of biological role, catalyzes the cyclization of farnesyl diphosphate (FPP) to isoafricanol. The protein is Isoafricanol synthase of Streptomyces malaysiensis.